A 157-amino-acid polypeptide reads, in one-letter code: Transcription elongation factor GreA (157 aa).

Belongs to the GreA/GreB family.

Its function is as follows. Necessary for efficient RNA polymerase transcription elongation past template-encoded arresting sites. The arresting sites in DNA have the property of trapping a certain fraction of elongating RNA polymerases that pass through, resulting in locked ternary complexes. Cleavage of the nascent transcript by cleavage factors such as GreA or GreB allows the resumption of elongation from the new 3'terminus. GreA releases sequences of 2 to 3 nucleotides. This is Transcription elongation factor GreA from Maricaulis maris (strain MCS10) (Caulobacter maris).